Here is a 69-residue protein sequence, read N- to C-terminus: Conotoxin Eb6.21 (69 aa).

Residues 1 to 17 (VLIIAVLFLTACQLTTA) form the signal peptide. Positions 18–41 (ETYSRGRQKHRARRSTDKNSKWTR) are excised as a propeptide. 3 disulfides stabilise this stretch: Cys-43–Cys-57, Cys-50–Cys-61, and Cys-56–Cys-68.

The protein belongs to the conotoxin O1 superfamily. In terms of tissue distribution, expressed by the venom duct.

Its subcellular location is the secreted. In Conus ebraeus (Hebrew cone), this protein is Conotoxin Eb6.21 (E1).